The following is a 181-amino-acid chain: Der GTPase-activating protein YihI (181 aa).

Disordered regions lie at residues 1-75 (MSRK…KKIP) and 145-181 (EPEA…DYKG). Residues 32–43 (RLRKKDKKRKGL) are compositionally biased toward basic residues. The segment covering 146 to 155 (PEAEEEFEDE) has biased composition (acidic residues). A compositionally biased stretch (basic and acidic residues) spans 156 to 165 (APVRKSRSDD). Acidic residues predominate over residues 166 to 181 (DLLADFEDFDMDDYKG).

Belongs to the YihI family. As to quaternary structure, interacts with Der.

Functionally, a GTPase-activating protein (GAP) that modifies Der/EngA GTPase function. May play a role in ribosome biogenesis. This chain is Der GTPase-activating protein YihI, found in Vibrio vulnificus (strain YJ016).